Reading from the N-terminus, the 341-residue chain is Phosphoribosylformylglycinamidine cyclo-ligase (341 aa).

It belongs to the AIR synthase family.

It localises to the cytoplasm. The catalysed reaction is 2-formamido-N(1)-(5-O-phospho-beta-D-ribosyl)acetamidine + ATP = 5-amino-1-(5-phospho-beta-D-ribosyl)imidazole + ADP + phosphate + H(+). It functions in the pathway purine metabolism; IMP biosynthesis via de novo pathway; 5-amino-1-(5-phospho-D-ribosyl)imidazole from N(2)-formyl-N(1)-(5-phospho-D-ribosyl)glycinamide: step 2/2. This Xanthomonas campestris pv. campestris (strain B100) protein is Phosphoribosylformylglycinamidine cyclo-ligase.